The primary structure comprises 294 residues: Thymidylate synthase (294 aa).

Residues arginine 31 and 156–157 contribute to the dUMP site; that span reads RR. Cysteine 176 (nucleophile) is an active-site residue. Residues 196–199, asparagine 207, and 237–239 contribute to the dUMP site; these read RSAD and HIY. (6R)-5,10-methylene-5,6,7,8-tetrahydrofolate is bound at residue aspartate 199. Alanine 293 contributes to the (6R)-5,10-methylene-5,6,7,8-tetrahydrofolate binding site.

This sequence belongs to the thymidylate synthase family. As to quaternary structure, homodimer.

The enzyme catalyses dUMP + (6R)-5,10-methylene-5,6,7,8-tetrahydrofolate = 7,8-dihydrofolate + dTMP. It participates in pyrimidine metabolism; dTTP biosynthesis. The chain is Thymidylate synthase (70) from Saimiri sciureus (Common squirrel monkey).